The primary structure comprises 108 residues: Integration host factor subunit alpha (108 aa).

Belongs to the bacterial histone-like protein family. Heterodimer of an alpha and a beta chain.

Its function is as follows. This protein is one of the two subunits of integration host factor, a specific DNA-binding protein that functions in genetic recombination as well as in transcriptional and translational control. The polypeptide is Integration host factor subunit alpha (Rhodopseudomonas palustris (strain BisB18)).